We begin with the raw amino-acid sequence, 368 residues long: Queuine tRNA-ribosyltransferase (368 aa).

The active-site Proton acceptor is the Asp-89. Residues 89-93, Asp-143, and Gly-216 contribute to the substrate site; that span reads DSGGF. The tract at residues 247-253 is RNA binding; sequence GVGKPED. Asp-266 serves as the catalytic Nucleophile. The RNA binding; important for wobble base 34 recognition stretch occupies residues 271–275; the sequence is TRNAR. Zn(2+) contacts are provided by Cys-304, Cys-306, Cys-309, and His-335.

It belongs to the queuine tRNA-ribosyltransferase family. In terms of assembly, homodimer. Within each dimer, one monomer is responsible for RNA recognition and catalysis, while the other monomer binds to the replacement base PreQ1. It depends on Zn(2+) as a cofactor.

The enzyme catalyses 7-aminomethyl-7-carbaguanine + guanosine(34) in tRNA = 7-aminomethyl-7-carbaguanosine(34) in tRNA + guanine. It functions in the pathway tRNA modification; tRNA-queuosine biosynthesis. Functionally, catalyzes the base-exchange of a guanine (G) residue with the queuine precursor 7-aminomethyl-7-deazaguanine (PreQ1) at position 34 (anticodon wobble position) in tRNAs with GU(N) anticodons (tRNA-Asp, -Asn, -His and -Tyr). Catalysis occurs through a double-displacement mechanism. The nucleophile active site attacks the C1' of nucleotide 34 to detach the guanine base from the RNA, forming a covalent enzyme-RNA intermediate. The proton acceptor active site deprotonates the incoming PreQ1, allowing a nucleophilic attack on the C1' of the ribose to form the product. After dissociation, two additional enzymatic reactions on the tRNA convert PreQ1 to queuine (Q), resulting in the hypermodified nucleoside queuosine (7-(((4,5-cis-dihydroxy-2-cyclopenten-1-yl)amino)methyl)-7-deazaguanosine). This chain is Queuine tRNA-ribosyltransferase, found in Buchnera aphidicola subsp. Schizaphis graminum (strain Sg).